A 453-amino-acid chain; its full sequence is Mitochondrial import inner membrane translocase subunit TIM44 (453 aa).

A Phosphothreonine modification is found at Thr-129. 167–174 contributes to the ATP binding site; the sequence is GGEKLGKT. Residue Lys-178 is modified to N6-succinyllysine. Ser-181 bears the Phosphoserine mark. Lys-218 carries the post-translational modification N6-succinyllysine.

The protein belongs to the Tim44 family. In terms of assembly, probable component of the PAM complex at least composed of a mitochondrial HSP70 protein, GRPEL1 or GRPEL2, TIMM44, TIMM16/PAM16 and TIMM14/DNAJC19. The complex interacts with the TIMM23 component of the TIM23 complex. Interacts with SLC25A4/ANT1 and SLC25A5/ANT2; leading to inhibit the presequence translocase TIMM23, thereby promoting stabilization of PINK1.

It localises to the mitochondrion inner membrane. It is found in the mitochondrion matrix. Functionally, essential component of the PAM complex, a complex required for the translocation of transit peptide-containing proteins from the inner membrane into the mitochondrial matrix in an ATP-dependent manner. Recruits mitochondrial HSP70 to drive protein translocation into the matrix using ATP as an energy source. This Rattus norvegicus (Rat) protein is Mitochondrial import inner membrane translocase subunit TIM44 (Timm44).